Consider the following 241-residue polypeptide: 3-deoxy-D-manno-octulosonic acid kinase (241 aa).

Residue D171 is part of the active site.

This sequence belongs to the protein kinase superfamily. KdkA/RfaP family.

The protein resides in the cell inner membrane. It catalyses the reaction an alpha-Kdo-(2-&gt;6)-lipid IVA + ATP = a 4-O-phospho-alpha-Kdo-(2-&gt;6)-lipid IVA + ADP + H(+). It functions in the pathway bacterial outer membrane biogenesis; LPS core biosynthesis. Functionally, catalyzes the ATP-dependent phosphorylation of the 3-deoxy-D-manno-octulosonic acid (Kdo) residue in Kdo-lipid IV(A) at the 4-OH position. The polypeptide is 3-deoxy-D-manno-octulosonic acid kinase (Haemophilus influenzae (strain PittEE)).